Here is a 211-residue protein sequence, read N- to C-terminus: Cytidylate kinase (211 aa).

9-17 (GPAAAGKGT) lines the ATP pocket.

The protein belongs to the cytidylate kinase family. Type 1 subfamily.

The protein localises to the cytoplasm. The catalysed reaction is CMP + ATP = CDP + ADP. It catalyses the reaction dCMP + ATP = dCDP + ADP. The polypeptide is Cytidylate kinase (Paramagnetospirillum magneticum (strain ATCC 700264 / AMB-1) (Magnetospirillum magneticum)).